We begin with the raw amino-acid sequence, 331 residues long: Betaine-homocysteine S-methyltransferase (331 aa).

The 322-residue stretch at 3–324 (VNQKWNWDTK…TDVLAIRKYV (322 aa)) folds into the Hcy-binding domain. Cys243, Cys309, and Cys310 together coordinate Zn(2+).

It belongs to the Betaine-homocysteine S-methyltransferase, BHMT family. Zn(2+) serves as cofactor.

The enzyme catalyses L-homocysteine + glycine betaine = N,N-dimethylglycine + L-methionine. It functions in the pathway amino-acid biosynthesis; L-methionine biosynthesis via de novo pathway. Involved in the regulation of homocysteine metabolism. Converts betaine and homocysteine to dimethylglycine and methionine, respectively. The chain is Betaine-homocysteine S-methyltransferase from Drosophila melanogaster (Fruit fly).